The chain runs to 211 residues: Nucleoside triphosphate pyrophosphatase (211 aa).

Residue D76 is the Proton acceptor of the active site.

This sequence belongs to the Maf family. It depends on a divalent metal cation as a cofactor.

The protein localises to the cytoplasm. The enzyme catalyses a ribonucleoside 5'-triphosphate + H2O = a ribonucleoside 5'-phosphate + diphosphate + H(+). It carries out the reaction a 2'-deoxyribonucleoside 5'-triphosphate + H2O = a 2'-deoxyribonucleoside 5'-phosphate + diphosphate + H(+). In terms of biological role, nucleoside triphosphate pyrophosphatase. May have a dual role in cell division arrest and in preventing the incorporation of modified nucleotides into cellular nucleic acids. This is Nucleoside triphosphate pyrophosphatase from Saccharopolyspora erythraea (strain ATCC 11635 / DSM 40517 / JCM 4748 / NBRC 13426 / NCIMB 8594 / NRRL 2338).